The sequence spans 300 residues: Protoheme IX farnesyltransferase (300 aa).

9 helical membrane passes run 24-44 (VTQLAVFCAVIGMFLATPGMV), 48-68 (VLLGGTVGIGLLAGSAFAINC), 94-114 (LQILAFSTVLGGLGAWTLYTF), 118-138 (LTMWLTIATFVGYAVIYTLLL), 146-166 (IVIGGASGAMPPALGWAAVTG), 172-192 (AWILVLIIFVWTPPHFWVLAL), 217-237 (LHILLYTVILFAVTMMPFISG), 239-259 (SGAVYLTSAVLLGAIFLAYAW), and 278-298 (IVYLSLLFAALLVDHYARPVI).

This sequence belongs to the UbiA prenyltransferase family. Protoheme IX farnesyltransferase subfamily.

Its subcellular location is the cell inner membrane. It catalyses the reaction heme b + (2E,6E)-farnesyl diphosphate + H2O = Fe(II)-heme o + diphosphate. It functions in the pathway porphyrin-containing compound metabolism; heme O biosynthesis; heme O from protoheme: step 1/1. Functionally, converts heme B (protoheme IX) to heme O by substitution of the vinyl group on carbon 2 of heme B porphyrin ring with a hydroxyethyl farnesyl side group. The polypeptide is Protoheme IX farnesyltransferase (Burkholderia thailandensis (strain ATCC 700388 / DSM 13276 / CCUG 48851 / CIP 106301 / E264)).